The chain runs to 268 residues: Putative sgc region protein SgcQ (268 aa).

This sequence belongs to the BtpA family.

This is Putative sgc region protein SgcQ (sgcQ) from Escherichia coli (strain K12).